The following is a 522-amino-acid chain: Colicin-E1 (522 aa).

Disordered stretches follow at residues 26 to 52 (NGTP…AAIH) and 136 to 165 (EEKA…REKA). The segment covering 30–42 (DGSGSGGGGGKGG) has biased composition (gly residues). 2 helical membrane-spanning segments follow: residues 471 to 487 (AADA…FSLL) and 494 to 510 (IWGI…YIDK).

This sequence belongs to the channel forming colicin family.

The protein resides in the cell membrane. This colicin is a channel-forming colicin. This class of transmembrane toxins depolarize the cytoplasmic membrane, leading to dissipation of cellular energy. Functionally, colicins are polypeptide toxins produced by and active against E.coli and closely related bacteria. This chain is Colicin-E1 (cea), found in Escherichia coli.